We begin with the raw amino-acid sequence, 181 residues long: MGLSFAKLFSRLFAKKEMRILMVGLDAAGKTTILYKLKLGEIVTTIPTIGFNVETVEYKNISFTVWDVGGQDKIRPLWRHYFQNTQGLIFVVDSNDRDRVVEARDELHRMLNEDELRDAVLLVFANKQDLPNAMNAAEITDKLGLHSLRQRHWYIQSTCATSGEGLYEGLDWLSNNIAGKA.

Gly2 carries N-myristoyl glycine lipidation. GTP contacts are provided by residues Gly24–Thr31, Asp67–Gln71, and Asn126–Asp129.

The protein belongs to the small GTPase superfamily. Arf family.

The protein localises to the golgi apparatus. Its activity is regulated as follows. Activated by AGD10. Functionally, GTP-binding protein involved in protein trafficking; may modulate vesicle budding and uncoating within the Golgi apparatus. The polypeptide is ADP-ribosylation factor 2-A (ARF2-A) (Arabidopsis thaliana (Mouse-ear cress)).